A 1453-amino-acid chain; its full sequence is Clustered mitochondria protein homolog (1453 aa).

The segment covering 78-101 (LSENGQENSPHNSDSGHETSSPDS) has biased composition (polar residues). Residues 78–110 (LSENGQENSPHNSDSGHETSSPDSPLTPIEEGA) form a disordered region. In terms of domain architecture, Clu spans 439–690 (EDGIRAEDCT…RTFPPDVNYL (252 aa)). The tract at residues 979 to 1015 (PLTPSNEEVSMPINSVKKSRSSKRRKQISSGGKENDD) is disordered. Positions 995-1005 (KKSRSSKRRKQ) are enriched in basic residues. TPR repeat units follow at residues 1235 to 1268 (AEID…HQIY) and 1277 to 1310 (ALIY…YSKT).

It belongs to the CLU family.

The protein localises to the cytoplasm. Its function is as follows. mRNA-binding protein involved in proper cytoplasmic distribution of mitochondria. This Brugia malayi (Filarial nematode worm) protein is Clustered mitochondria protein homolog.